Consider the following 502-residue polypeptide: Zinc finger C3HC-type protein 1 (502 aa).

A2 carries the post-translational modification N-acetylalanine. A Phosphoserine modification is found at S24. T28 is modified (phosphothreonine). The segment at 36 to 73 is disordered; that stretch reads IDEGIAPEEGGVDAKDTSATSQSVNGSPQAEQPSLEST. Residues 52–72 show a composition bias toward polar residues; sequence TSATSQSVNGSPQAEQPSLES. A phosphoserine mark is found at S58 and S62. A Phosphothreonine modification is found at T84. The segment at 102–156 adopts a C3HC-type zinc-finger fold; it reads CAKYGWVTVECDMLKCSSCQAFLCASLQPAFDFDRYKQRCAELKKALCTAHEKFC. Residues 170 to 210 form an F-box-like region; sequence LPLDEPAILVSEFLDRFQSLCHLDLQLPSLRPEDLKTMCLT. The segment at 302-423 is disordered; that stretch reads SSPIPGLEGR…SSRSFFDPTS (122 aa). S321 and S329 each carry phosphoserine. A compositionally biased stretch (polar residues) spans 327–338; the sequence is TRSQDATFSPGS. T333 bears the Phosphothreonine mark. A phosphoserine mark is found at S335, S338, S344, S354, S359, and S370. Positions 351 to 360 are enriched in polar residues; it reads RTRSWDSSSP. Residues 371-380 are compositionally biased toward low complexity; that stretch reads PTTRTRPVTR. S381 carries the phosphoserine modification. A phosphothreonine mark is found at T384 and T387. A Phosphoserine modification is found at S395. The Nuclear localization signal signature appears at 396 to 402; sequence PLRKAKR. Phosphoserine occurs at positions 407 and 483. Residues 407-422 show a composition bias toward low complexity; sequence SSSSSDTSSRSFFDPT.

In terms of assembly, interacts with TPR; this interaction mediates ZC3HC1 nuclear envelopes (NE)-association but also required for proper positioning of a substantial amount of TPR at the nuclear basket (NB). Phosphorylated. May also be weakly phosphorylated on Tyr residues. Widely expressed. Highly expressed in heart, skeletal muscle and testis. Expressed in brain, placenta, lung, kidney, liver, pancreas, spleen, thymus, prostate, ovary small intestine and colon. Weakly or not expressed in leukocytes.

It localises to the nucleus. It is found in the nucleus envelope. Its function is as follows. Required for proper positioning of a substantial amount of TPR at the nuclear basket (NB) through interaction with TPR. The chain is Zinc finger C3HC-type protein 1 from Homo sapiens (Human).